Here is a 461-residue protein sequence, read N- to C-terminus: Photosystem II CP43 reaction center protein (461 aa).

The propeptide occupies 1–2 (ME). N-acetylthreonine is present on Thr3. Thr3 bears the Phosphothreonine mark. Transmembrane regions (helical) follow at residues 57-81 (LFEVAHFVPQKPMYEQGLILLPHLA), 122-143 (LAGPDTLEESFRFFGYTWKRKK), 166-188 (KAMYGGGVYDTWWPGGGDVRSIT), 243-263 (RPSPWVVRTFVWSGEAYLSYS), and 279-300 (WFNNTVYPSEFYGPTGPEASQA). Glu355 contacts [CaMn4O5] cluster. The helical transmembrane segment at 435-459 (RARAAAIGFEKGIDRSREIARKLKP) threads the bilayer.

It belongs to the PsbB/PsbC family. PsbC subfamily. As to quaternary structure, PSII is composed of 1 copy each of membrane proteins PsbA, PsbB, PsbC, PsbD, PsbE, PsbF, PsbH, PsbI, PsbJ, PsbK, PsbL, PsbM, PsbT, PsbY, PsbZ, Psb30/Ycf12, at least 3 peripheral proteins of the oxygen-evolving complex and a large number of cofactors. It forms dimeric complexes. Requires Binds multiple chlorophylls and provides some of the ligands for the Ca-4Mn-5O cluster of the oxygen-evolving complex. It may also provide a ligand for a Cl- that is required for oxygen evolution. PSII binds additional chlorophylls, carotenoids and specific lipids. as cofactor.

It is found in the plastid. It localises to the chloroplast thylakoid membrane. In terms of biological role, one of the components of the core complex of photosystem II (PSII). It binds chlorophyll and helps catalyze the primary light-induced photochemical processes of PSII. PSII is a light-driven water:plastoquinone oxidoreductase, using light energy to abstract electrons from H(2)O, generating O(2) and a proton gradient subsequently used for ATP formation. In Euglena gracilis, this protein is Photosystem II CP43 reaction center protein.